The primary structure comprises 437 residues: tRNA wybutosine-synthesizing protein 2 homolog (437 aa).

S-adenosyl-L-methionine is bound by residues serine 208, lysine 215, glutamate 255, and 283 to 284 (DN). A compositionally biased stretch (polar residues) spans 331–344 (SFSGKNPQPPGSSN). Positions 331-374 (SFSGKNPQPPGSSNMEKKHWPHPQKITTDKQGNRTTGSCMGEMS) are disordered.

This sequence belongs to the class I-like SAM-binding methyltransferase superfamily. TRM5/TYW2 family.

The enzyme catalyses 4-demethylwyosine(37) in tRNA(Phe) + S-adenosyl-L-methionine = 4-demethyl-7-[(3S)-3-amino-3-carboxypropyl]wyosine(37) in tRNA(Phe) + S-methyl-5'-thioadenosine + H(+). The protein operates within tRNA modification; wybutosine-tRNA(Phe) biosynthesis. Its function is as follows. S-adenosyl-L-methionine-dependent transferase that acts as a component of the wybutosine biosynthesis pathway. Wybutosine is a hyper modified guanosine with a tricyclic base found at the 3'-position adjacent to the anticodon of eukaryotic phenylalanine tRNA. Catalyzes the transfer of the alpha-amino-alpha-carboxypropyl (acp) group from S-adenosyl-L-methionine to the C-7 position of 4-demethylwyosine (imG-14) to produce wybutosine-86. This chain is tRNA wybutosine-synthesizing protein 2 homolog (Trmt12), found in Rattus norvegicus (Rat).